Reading from the N-terminus, the 513-residue chain is MTADIHHIGGAPVIIGAGIAGLMTALHLAPQPVVLLSRTSLGTEASSILAQGGLAASLGEDDSPDLHLADTLAAGEGLCDEQMARRVVEAAPQAVENLIRLGTPFDRSLDGRLQLGLEAAHSRRRIVHAAGDATGRELFRALLGVARRTRSITIMEGMTALRLVVAEGSIVGLLTVLHGAVFALPTRRVVLATGGIGGLFCDTTNPLSSFGHGLALAACAGAELADLEFVQFHPTALDIARRPMPLVSEAVRGEGAVLIDEHGHRLLADTPGAELASRDVVARAISDQLAAGHGVYLDARHCLGQKFARRFPAIDAICKHAGIDPAVEPIPVRPAAHYHMGGVAVDAEGRTSVSGLWACGEVACTGLHGANRLASNSLTEAVATAAWVAESVAGTSAGWQWPRLPATVPIRPDPSPIRTIVSNALGIVRNGKSLCDTVATLLPISVCETAAADPALVALLMAIAALRREESRGSHFRSDFPGRDAAALPSRLTLCTAFENAVTLRWQASERSR.

FAD is bound by residues 17 to 20 (AGIA) and 46 to 53 (SSILAQGG). Arg278 acts as the Proton donor/acceptor in catalysis. FAD contacts are provided by residues Glu361 and 377–378 (SL).

This sequence belongs to the FAD-dependent oxidoreductase 2 family. NadB subfamily. It depends on FAD as a cofactor.

The protein resides in the cytoplasm. The catalysed reaction is L-aspartate + O2 = iminosuccinate + H2O2. The protein operates within cofactor biosynthesis; NAD(+) biosynthesis; iminoaspartate from L-aspartate (oxidase route): step 1/1. Its function is as follows. Catalyzes the oxidation of L-aspartate to iminoaspartate, the first step in the de novo biosynthesis of NAD(+). This chain is L-aspartate oxidase (nadB), found in Mesorhizobium japonicum (strain LMG 29417 / CECT 9101 / MAFF 303099) (Mesorhizobium loti (strain MAFF 303099)).